The chain runs to 236 residues: C-&gt;U-editing enzyme APOBEC-1 (236 aa).

The CMP/dCMP-type deaminase domain occupies 10–134 (KDYTLRRRIE…RRNRQGLKDL (125 aa)). H61 is a binding site for Zn(2+). The active-site Proton donor is E63. Zn(2+) contacts are provided by C93 and C96.

It belongs to the cytidine and deoxycytidylate deaminase family. Homodimer. Interacts with A1CF; form an mRNA editing complex. Interacts with RBM47; form an mRNA editing complex. Found in a complex with CELF2/CUGBP2 and A1CF. Interacts with HNRPAB. Interacts with SYNCRIP. Requires Zn(2+) as cofactor. As to expression, expressed exclusively in the intestine.

It localises to the cytoplasm. The protein resides in the nucleus. It catalyses the reaction a cytidine in mRNA + H2O + H(+) = a uridine in mRNA + NH4(+). It carries out the reaction cytidine(6666) in apoB mRNA + H2O + H(+) = uridine(6666) in apoB mRNA + NH4(+). Cytidine deaminase catalyzing the cytidine to uridine postranscriptional editing of a variety of mRNAs. Form complexes with cofactors that confer differential editing activity and selectivity. Responsible for the postranscriptional editing of a CAA codon for Gln to a UAA codon for stop in the apolipoprotein B mRNA. Also involved in CGA (Arg) to UGA (Stop) editing in the NF1 mRNA. May also play a role in the epigenetic regulation of gene expression by participating in DNA demethylation. In Oryctolagus cuniculus (Rabbit), this protein is C-&gt;U-editing enzyme APOBEC-1.